A 503-amino-acid polypeptide reads, in one-letter code: Maturase K (503 aa).

This sequence belongs to the intron maturase 2 family. MatK subfamily.

It localises to the plastid. The protein resides in the chloroplast. Its function is as follows. Usually encoded in the trnK tRNA gene intron. Probably assists in splicing its own and other chloroplast group II introns. In Psilotum nudum (Whisk fern), this protein is Maturase K.